A 151-amino-acid polypeptide reads, in one-letter code: Deoxyuridine 5'-triphosphate nucleotidohydrolase (151 aa).

Substrate is bound by residues 70 to 72, asparagine 83, 87 to 89, and methionine 97; these read RSG and LID.

It belongs to the dUTPase family. It depends on Mg(2+) as a cofactor.

The catalysed reaction is dUTP + H2O = dUMP + diphosphate + H(+). Its pathway is pyrimidine metabolism; dUMP biosynthesis; dUMP from dCTP (dUTP route): step 2/2. This enzyme is involved in nucleotide metabolism: it produces dUMP, the immediate precursor of thymidine nucleotides and it decreases the intracellular concentration of dUTP so that uracil cannot be incorporated into DNA. This is Deoxyuridine 5'-triphosphate nucleotidohydrolase from Pseudomonas aeruginosa (strain LESB58).